Here is a 179-residue protein sequence, read N- to C-terminus: Large ribosomal subunit protein uL5 (179 aa).

This sequence belongs to the universal ribosomal protein uL5 family. Part of the 50S ribosomal subunit; part of the 5S rRNA/L5/L18/L25 subcomplex. Contacts the 5S rRNA and the P site tRNA. Forms a bridge to the 30S subunit in the 70S ribosome.

This is one of the proteins that bind and probably mediate the attachment of the 5S RNA into the large ribosomal subunit, where it forms part of the central protuberance. In the 70S ribosome it contacts protein S13 of the 30S subunit (bridge B1b), connecting the 2 subunits; this bridge is implicated in subunit movement. Contacts the P site tRNA; the 5S rRNA and some of its associated proteins might help stabilize positioning of ribosome-bound tRNAs. The chain is Large ribosomal subunit protein uL5 from Prochlorococcus marinus (strain SARG / CCMP1375 / SS120).